The following is a 192-amino-acid chain: BREX protein BrxB (192 aa).

It belongs to the BrxB family.

BREX systems (bacteriophage exclusion) provide immunity against bacteriophage. Part of a type 1 BREX system. This system allows phage adsorption but prevents phage DNA replication, without degradation of the phage DNA. Methylation of bacterial DNA by PglX probably guides self/non-self discrimination. When the brxA-brxB-brxC-pglX and pglZ-brxL operons are transformed into a susceptible B.subtilis strain (BEST7003) they confer resistance to bacteriophages SPbeta, SP16, Zeta, phi3T and SP02 and partial protection to phages SP01 and SP82G (these include lytic and temperate phage). They do not protect against phages phi105, rho10 or rho14. Additionally confers a very slight reduction in efficiency of plasmid transformation. This Bacillus cereus (strain H3081.97) protein is BREX protein BrxB.